Reading from the N-terminus, the 181-residue chain is Large ribosomal subunit protein uL5 (181 aa).

It belongs to the universal ribosomal protein uL5 family. Part of the 50S ribosomal subunit; part of the 5S rRNA/L5/L18/L25 subcomplex. Contacts the 5S rRNA and the P site tRNA. Forms a bridge to the 30S subunit in the 70S ribosome.

Its function is as follows. This is one of the proteins that bind and probably mediate the attachment of the 5S RNA into the large ribosomal subunit, where it forms part of the central protuberance. In the 70S ribosome it contacts protein S13 of the 30S subunit (bridge B1b), connecting the 2 subunits; this bridge is implicated in subunit movement. Contacts the P site tRNA; the 5S rRNA and some of its associated proteins might help stabilize positioning of ribosome-bound tRNAs. In Rickettsia canadensis (strain McKiel), this protein is Large ribosomal subunit protein uL5.